A 241-amino-acid polypeptide reads, in one-letter code: MRLSEILAVALVTGATAYDLPDNLKQIYEKHKGKCSKVYQKGFTNGGHSDGKSFEYCGDIEGAIFMHSSAKGGQYTNMDVDCDGANNSAGKCSNDPSGQGVTAFKDEVKKFGIPDLDANLHPYIVFGNEEHSPQFKPQKYGMEPLSVMAVVCNGKLHYGIWGDTNGGTSTGEASLSMAELCFPEEKPDGDHGHDDNDVLYIGFTGKDAVPGKSANWKAKKTEDFEDSIKSIGDKLVAGLKA.

The signal sequence occupies residues 1 to 17 (MRLSEILAVALVTGATA). The N-linked (GlcNAc...) asparagine glycan is linked to Asn86.

The protein belongs to the glycosyl hydrolase 75 family.

It localises to the secreted. The enzyme catalyses Endohydrolysis of beta-(1-&gt;4)-linkages between D-glucosamine residues in a partly acetylated chitosan.. In terms of biological role, chitosanase catalyzing the endo-type cleavage of chitosan, the deacylated form of chitin. Chitosanase may be crucial in the degradation of the deacetylated portion of chitin in the fungal cell wall. Chitoolisaccharides produced by the hydrolysis of partially N-acetylated chitosan are known to have many biological activities, including antibacterial activity, immune-enhancing effects, and elicitor activity. This is Endo-chitosanase B (csnB) from Aspergillus oryzae (strain ATCC 42149 / RIB 40) (Yellow koji mold).